Consider the following 705-residue polypeptide: Lethal(3)malignant brain tumor-like protein 2 (705 aa).

Residues 1–84 (MEKPPSIEET…GTPRSLDGSG (84 aa)) form a disordered region. Residue Ser13 is modified to Phosphoserine. Over residues 15 to 25 (PMEEEEDDDLE) the composition is skewed to acidic residues. Low complexity predominate over residues 38-49 (SSVGSESSSYLE). Residues 50-60 (ESSEAENEDRE) show a composition bias toward acidic residues. Ser67 is subject to Phosphoserine. Phosphothreonine is present on Thr76. An FCS-type zinc finger spans residues 81 to 116 (DGSGSEPAVCEMCGIVGTREAFFSKTKRFCSVSCSR). Zn(2+) is bound by residues Cys90, Cys93, Cys110, and Cys114. MBT repeat units lie at residues 179 to 283 (FDWG…LVPP), 291 to 391 (TDWK…IKMS), 397 to 500 (MAHH…LTPP), and 508 to 604 (FNWE…LQPP). Ser338 is subject to Phosphoserine. Lys405 is covalently cross-linked (Glycyl lysine isopeptide (Lys-Gly) (interchain with G-Cter in SUMO2)). The disordered stretch occupies residues 608-705 (EPATPLKAKE…VENIKQETDD (98 aa)). Over residues 619–634 (TKKKKKQFGKKRKRIP) the composition is skewed to basic residues. Residues Lys647, Lys659, and Lys675 each participate in a glycyl lysine isopeptide (Lys-Gly) (interchain with G-Cter in SUMO2) cross-link. Residues Ser683, Ser688, and Ser689 each carry the phosphoserine modification. Lys700 participates in a covalent cross-link: Glycyl lysine isopeptide (Lys-Gly) (interchain with G-Cter in SUMO1); alternate. A Glycyl lysine isopeptide (Lys-Gly) (interchain with G-Cter in SUMO2); alternate cross-link involves residue Lys700.

As to quaternary structure, part of the E2F6.com-1 complex in G0 phase composed of E2F6, MGA, MAX, TFDP1, CBX3, BAT8, EUHMTASE1, RING1, RNF2, MBLR, BAT8 and YAF2.

The protein localises to the nucleus. Functionally, putative Polycomb group (PcG) protein. PcG proteins maintain the transcriptionally repressive state of genes, probably via a modification of chromatin, rendering it heritably changed in its expressibility. Its association with a chromatin-remodeling complex suggests that it may contribute to prevent expression of genes that trigger the cell into mitosis. Binds to monomethylated and dimethylated 'Lys-20' on histone H4. Binds histone H3 peptides that are monomethylated or dimethylated on 'Lys-4', 'Lys-9' or 'Lys-27'. This Pongo abelii (Sumatran orangutan) protein is Lethal(3)malignant brain tumor-like protein 2 (L3MBTL2).